Consider the following 234-residue polypeptide: Inosine triphosphate pyrophosphatase (234 aa).

An ITP-binding site is contributed by 11 to 16; the sequence is SGNKGK. Glu40 provides a ligand contact to Mg(2+). Residues Lys53, 81–82, Lys98, 176–179, Lys203, and 208–209 contribute to the ITP site; these read DT, FGWD, and HR.

This sequence belongs to the HAM1 NTPase family. Homodimer. It depends on Mg(2+) as a cofactor. The cofactor is Mn(2+).

It localises to the cytoplasm. The catalysed reaction is ITP + H2O = IMP + diphosphate + H(+). The enzyme catalyses dITP + H2O = dIMP + diphosphate + H(+). It catalyses the reaction XTP + H2O = XMP + diphosphate + H(+). Pyrophosphatase that hydrolyzes non-canonical purine nucleotides such as inosine triphosphate (ITP), deoxyinosine triphosphate (dITP) or xanthosine 5'-triphosphate (XTP) to their respective monophosphate derivatives. The enzyme does not distinguish between the deoxy- and ribose forms. Probably excludes non-canonical purines from RNA and DNA precursor pools, thus preventing their incorporation into RNA and DNA and avoiding chromosomal lesions. This chain is Inosine triphosphate pyrophosphatase, found in Leishmania major.